Here is a 691-residue protein sequence, read N- to C-terminus: Elongation factor G 2 (691 aa).

The tr-type G domain occupies 8-287; the sequence is DRYRNIGIMA…AVVDYLPSPL (280 aa). GTP is bound by residues 17–24, 85–89, and 139–142; these read AHIDAGKT, DTPGH, and NKMD.

It belongs to the TRAFAC class translation factor GTPase superfamily. Classic translation factor GTPase family. EF-G/EF-2 subfamily.

The protein localises to the cytoplasm. Catalyzes the GTP-dependent ribosomal translocation step during translation elongation. During this step, the ribosome changes from the pre-translocational (PRE) to the post-translocational (POST) state as the newly formed A-site-bound peptidyl-tRNA and P-site-bound deacylated tRNA move to the P and E sites, respectively. Catalyzes the coordinated movement of the two tRNA molecules, the mRNA and conformational changes in the ribosome. This chain is Elongation factor G 2, found in Myxococcus xanthus (strain DK1622).